The following is a 178-amino-acid chain: Bifunctional protein PyrR (178 aa).

The PRPP-binding signature appears at 99–111 (IIIIDDVLYTCRT).

It belongs to the purine/pyrimidine phosphoribosyltransferase family. PyrR subfamily. As to quaternary structure, homodimer and homohexamer; in equilibrium.

The catalysed reaction is UMP + diphosphate = 5-phospho-alpha-D-ribose 1-diphosphate + uracil. In terms of biological role, regulates transcriptional attenuation of the pyrimidine nucleotide (pyr) operon by binding in a uridine-dependent manner to specific sites on pyr mRNA. This disrupts an antiterminator hairpin in the RNA and favors formation of a downstream transcription terminator, leading to a reduced expression of downstream genes. Functionally, also displays a weak uracil phosphoribosyltransferase activity which is not physiologically significant. The chain is Bifunctional protein PyrR from Clostridium beijerinckii (strain ATCC 51743 / NCIMB 8052) (Clostridium acetobutylicum).